A 361-amino-acid polypeptide reads, in one-letter code: Salt tolerance receptor-like cytoplasmic kinase 1 (361 aa).

S-palmitoyl cysteine attachment occurs at residues C5, C10, and C14. The 281-residue stretch at 67 to 347 (GFSSRVIGHG…RALQEKTSAL (281 aa)) folds into the Protein kinase domain. ATP is bound by residues 73–81 (IGHGGFSTV) and K95. D195 (proton acceptor) is an active-site residue.

Belongs to the protein kinase superfamily. Ser/Thr protein kinase family. Self-interacts. Interacts with CATA, CATB and CATC at the plasma membrane. Post-translationally, palmitoylated. Palmotylation at Cys-5, Cys-10 and Cys-14 by DHHC9 is required for plasma membrane targeting and STRK1 function. Autophosphorylated. In terms of tissue distribution, accumulates in seeds. Mainly expressed in young roots, and, to a lower extent, in leaf veins, seedlings, stems, leaf sheath and young spikelet.

Its subcellular location is the cell membrane. The catalysed reaction is L-seryl-[protein] + ATP = O-phospho-L-seryl-[protein] + ADP + H(+). It catalyses the reaction L-threonyl-[protein] + ATP = O-phospho-L-threonyl-[protein] + ADP + H(+). The enzyme catalyses L-tyrosyl-[protein] + ATP = O-phospho-L-tyrosyl-[protein] + ADP + H(+). Functionally, acts probably as a dual specificity protein kinase. Regulates hydrogen peroxide (H(2)O(2)) homeostasis and improves salt tolerance by phosphorylating tyrosine residues of CATC thus activating its catalase activity. Promotes growth at the seedling stage and prevents grain yield loss under salt stress conditions. This is Salt tolerance receptor-like cytoplasmic kinase 1 from Oryza sativa subsp. japonica (Rice).